The primary structure comprises 330 residues: Lactamase-like protein nscB (330 aa).

Residues His97, His99, Asp101, and His102 each contribute to the Zn(2+) site. Asp101 functions as the Proton donor/acceptor in the catalytic mechanism.

It belongs to the metallo-beta-lactamase superfamily. Requires Zn(2+) as cofactor.

It functions in the pathway secondary metabolite biosynthesis. Functionally, lactamase-like protein; part of the gene cluster that mediates the biosynthesis of neosartoricin, a prenylated anthracenone that exhibits T-cell antiproliferative activity, suggestive of a physiological role as an immunosuppressive agent. The non-reducing polyketide synthase nscA probably synthesizes and cyclizes the decaketide backbone. The hydrolase nscB then mediates the product release through hydrolysis followed by spontaneous decarboxylation. The prenyltransferase nscD catalyzes the addition of the dimethylallyl group to the aromatic C5. The FAD-dependent monooxygenase nscC is then responsible for the stereospecific hydroxylation at C2. There is no gene encoding O-acetyltransferase in the nsc gene cluster; thus, the last step of 2-O-acetylation leading to neosartoricin may be catalyzed by an unidentified O-acetyltransferase. In Aspergillus fumigatus (strain ATCC MYA-4609 / CBS 101355 / FGSC A1100 / Af293) (Neosartorya fumigata), this protein is Lactamase-like protein nscB.